The chain runs to 201 residues: E3 ubiquitin-protein ligase MIR1 (201 aa).

An RING-CH-type zinc finger spans residues 1–58 (MDSTGEFCWICHQPEGPLKRFCGCKGSCAVSHQDCLRGWLETSRRQTCALCGTPYSMK). Residues 1–81 (MDSTGEFCWI…EEVLAAMEAC (81 aa)) are Cytoplasmic-facing. Zn(2+)-binding residues include C8, C11, C22, C24, H32, C35, C48, and C51. Residues 52-79 (GTPYSMKWKTKPLREWTWGEEEVLAAME) are DIRT. The helical transmembrane segment at 82-102 (LPLVLIPLAVLMIVMGTWLLV) threads the bilayer. Over 103–113 (NHNGFLSPRMQ) the chain is Extracellular. The chain crosses the membrane as a helical span at residues 114–134 (VVLVVIVLLAMIVFSASASYV). Residues 135–201 (MVEGPGCLDT…RLGCVRLCCV (67 aa)) lie on the Cytoplasmic side of the membrane.

In terms of assembly, interacts with host UBE2J2.

The protein resides in the host endoplasmic reticulum membrane. The catalysed reaction is [E2 ubiquitin-conjugating enzyme]-S-ubiquitinyl-L-cysteine + [acceptor protein]-L-cysteine = [E2 ubiquitin-conjugating enzyme]-L-cysteine + [acceptor protein]-S-ubiquitinyl-L-cysteine.. It participates in protein modification; protein ubiquitination. Its function is as follows. E3 ubiquitin-protein ligase that mediates ubiquitination of host surface class I (MHC-I) H-2D(b)/H2-D1 and H-2K(b)/H2-K1 molecules before they exit the endoplasmic reticulum, leading to their degradation by the endoplasmic reticulum-associated degradation (ERAD) system, thus blocking the immune detection of virus-infected cells. Mediates ubiquitination of lysine, as well as serine and threonine residues present in the cytoplasmic tail of surface class I molecules. Promotes ubiquitination of hydroxylated serine or threonine residues via ester bonds instead of the classical isopeptide linkage. This Murid herpesvirus 4 (MuHV-4) protein is E3 ubiquitin-protein ligase MIR1 (K3).